Consider the following 834-residue polypeptide: DNA gyrase subunit A (834 aa).

One can recognise a Topo IIA-type catalytic domain in the interval 34–500; the sequence is LPDIRDGLKP…ADDIRDIEDI (467 aa). The active-site O-(5'-phospho-DNA)-tyrosine intermediate is the tyrosine 122. The GyrA-box signature appears at 527–533; the sequence is QRRGGHG. Residues 810–834 form a disordered region; it reads LSSNENDDEVLSGSEEECSDTVSLR. Over residues 814–828 the composition is skewed to acidic residues; sequence ENDDEVLSGSEEECS.

The protein belongs to the type II topoisomerase GyrA/ParC subunit family. Heterotetramer, composed of two GyrA and two GyrB chains. In the heterotetramer, GyrA contains the active site tyrosine that forms a transient covalent intermediate with DNA, while GyrB binds cofactors and catalyzes ATP hydrolysis.

It is found in the cytoplasm. The catalysed reaction is ATP-dependent breakage, passage and rejoining of double-stranded DNA.. Its function is as follows. A type II topoisomerase that negatively supercoils closed circular double-stranded (ds) DNA in an ATP-dependent manner to modulate DNA topology and maintain chromosomes in an underwound state. Negative supercoiling favors strand separation, and DNA replication, transcription, recombination and repair, all of which involve strand separation. Also able to catalyze the interconversion of other topological isomers of dsDNA rings, including catenanes and knotted rings. Type II topoisomerases break and join 2 DNA strands simultaneously in an ATP-dependent manner. The chain is DNA gyrase subunit A from Chlamydia pneumoniae (Chlamydophila pneumoniae).